A 101-amino-acid chain; its full sequence is NAD(P)H-quinone oxidoreductase subunit 4L, chloroplastic (101 aa).

Transmembrane regions (helical) follow at residues 2–22 (MFEH…YGLI), 32–52 (ICLE…SDLF), and 61–81 (IFAI…LSIL).

It belongs to the complex I subunit 4L family. In terms of assembly, NDH is composed of at least 16 different subunits, 5 of which are encoded in the nucleus.

It localises to the plastid. The protein resides in the chloroplast thylakoid membrane. The enzyme catalyses a plastoquinone + NADH + (n+1) H(+)(in) = a plastoquinol + NAD(+) + n H(+)(out). It catalyses the reaction a plastoquinone + NADPH + (n+1) H(+)(in) = a plastoquinol + NADP(+) + n H(+)(out). NDH shuttles electrons from NAD(P)H:plastoquinone, via FMN and iron-sulfur (Fe-S) centers, to quinones in the photosynthetic chain and possibly in a chloroplast respiratory chain. The immediate electron acceptor for the enzyme in this species is believed to be plastoquinone. Couples the redox reaction to proton translocation, and thus conserves the redox energy in a proton gradient. The polypeptide is NAD(P)H-quinone oxidoreductase subunit 4L, chloroplastic (Agrostis stolonifera (Creeping bentgrass)).